Consider the following 318-residue polypeptide: D-alanine--D-alanine ligase (318 aa).

An ATP-grasp domain is found at K116 to A315. M146 to T201 lines the ATP pocket. Mg(2+)-binding residues include D269, E282, and N284.

Belongs to the D-alanine--D-alanine ligase family. It depends on Mg(2+) as a cofactor. Mn(2+) is required as a cofactor.

It is found in the cytoplasm. It catalyses the reaction 2 D-alanine + ATP = D-alanyl-D-alanine + ADP + phosphate + H(+). It functions in the pathway cell wall biogenesis; peptidoglycan biosynthesis. Its function is as follows. Cell wall formation. This Pseudoalteromonas atlantica (strain T6c / ATCC BAA-1087) protein is D-alanine--D-alanine ligase.